Reading from the N-terminus, the 432-residue chain is Probable exopolygalacturonase X (432 aa).

A signal peptide spans 1–23 (MKFSYSFVQVVSLLLSLSPSVEG). N-linked (GlcNAc...) asparagine glycosylation is found at N113, N129, and N199. The stretch at 231 to 252 (SDNIVIQNSVINNGDDCVSFKP) is one PbH1 1 repeat. D245 serves as the catalytic Proton donor. A disulfide bridge links C247 with C264. 2 N-linked (GlcNAc...) asparagine glycosylation sites follow: N253 and N265. PbH1 repeat units lie at residues 254 to 274 (STNI…SVGS), 285 to 306 (VQNV…RIKV), and 327 to 348 (VKNI…EVTQ). The active site involves H268. Residues N292, N297, N329, N354, and N364 are each glycosylated (N-linked (GlcNAc...) asparagine). One copy of the PbH1 5 repeat lies at 362–394 (PSNLTISDIHFKNFRGTTSGKRDPDVGTIVCSS). An intrachain disulfide couples C392 to C398.

The protein belongs to the glycosyl hydrolase 28 family.

The protein localises to the secreted. It carries out the reaction [(1-&gt;4)-alpha-D-galacturonosyl](n) + H2O = alpha-D-galacturonate + [(1-&gt;4)-alpha-D-galacturonosyl](n-1). Its function is as follows. Specific in hydrolyzing the terminal glycosidic bond of polygalacturonic acid and oligogalacturonates. This is Probable exopolygalacturonase X (pgaX) from Neosartorya fischeri (strain ATCC 1020 / DSM 3700 / CBS 544.65 / FGSC A1164 / JCM 1740 / NRRL 181 / WB 181) (Aspergillus fischerianus).